A 323-amino-acid chain; its full sequence is Aspartate carbamoyltransferase catalytic subunit (323 aa).

Carbamoyl phosphate-binding residues include Arg68 and Thr69. Lys96 serves as a coordination point for L-aspartate. Carbamoyl phosphate contacts are provided by Arg118, His148, and Gln151. L-aspartate is bound by residues Arg181 and Arg236. Residues Gly277 and Pro278 each contribute to the carbamoyl phosphate site.

Belongs to the aspartate/ornithine carbamoyltransferase superfamily. ATCase family. As to quaternary structure, heterododecamer (2C3:3R2) of six catalytic PyrB chains organized as two trimers (C3), and six regulatory PyrI chains organized as three dimers (R2).

The enzyme catalyses carbamoyl phosphate + L-aspartate = N-carbamoyl-L-aspartate + phosphate + H(+). It participates in pyrimidine metabolism; UMP biosynthesis via de novo pathway; (S)-dihydroorotate from bicarbonate: step 2/3. Its function is as follows. Catalyzes the condensation of carbamoyl phosphate and aspartate to form carbamoyl aspartate and inorganic phosphate, the committed step in the de novo pyrimidine nucleotide biosynthesis pathway. In Verminephrobacter eiseniae (strain EF01-2), this protein is Aspartate carbamoyltransferase catalytic subunit.